The chain runs to 517 residues: Cytochrome P450 52A8 (517 aa).

Cys-464 contributes to the heme binding site.

The protein belongs to the cytochrome P450 family. The cofactor is heme.

In terms of biological role, together with an NADPH cytochrome P450 the enzyme system catalyzes the terminal hydroxylation as the first step in the assimilation of alkanes and fatty acids. Preferentially hydroxylates lauric acid. In Candida tropicalis (Yeast), this protein is Cytochrome P450 52A8 (CYP52A8).